The following is an 85-amino-acid chain: V-type proton ATPase subunit f (85 aa).

Over 1–10 the chain is Lumenal; the sequence is MRPVVSTGKA. The chain crosses the membrane as a helical span at residues 11 to 31; the sequence is WCCTVLSAFGVVILSVIAHLF. The Cytoplasmic segment spans residues 32 to 54; the sequence is NTNHESFVGSINDPEDGPAVAHT. Residues 55–75 form a helical membrane-spanning segment; that stretch reads VYLAALVYLVFFVFCGFQVYL. Residues 76–85 are Lumenal-facing; sequence ARRKPSIELR.

As to quaternary structure, V-ATPase is a heteromultimeric enzyme composed of a peripheral catalytic V1 complex (components A to H) attached to an integral membrane V0 proton pore complex (components: a, c, c', c'', d, e, f and VOA1).

It localises to the endoplasmic reticulum membrane. The protein localises to the vacuole membrane. Functionally, accessory component of the V0 complex of vacuolar(H+)-ATPase (V-ATPase), a multisubunit enzyme composed of a peripheral complex (V1) that hydrolyzes ATP and a membrane integral complex (V0) that translocates protons. V-ATPase is responsible for acidifying and maintaining the pH of intracellular compartments. The sequence is that of V-type proton ATPase subunit f from Saccharomyces cerevisiae (strain ATCC 204508 / S288c) (Baker's yeast).